The chain runs to 67 residues: Probable pilin MJ1400 (67 aa).

A propeptide spanning residues 1 to 13 is cleaved from the precursor; that stretch reads MKFIMKFIKSNKG. Positions 14–22 match the QXSXEXXXL motif; the sequence is QISLEFSLL.

Post-translationally, the N-terminus is cleaved by the prepilin peptidase EppA, which recognizes the class III signal sequence.

It localises to the secreted. The protein localises to the cell surface. Its subcellular location is the fimbrium. The chain is Probable pilin MJ1400 from Methanocaldococcus jannaschii (strain ATCC 43067 / DSM 2661 / JAL-1 / JCM 10045 / NBRC 100440) (Methanococcus jannaschii).